The sequence spans 83 residues: MPRKEKIGLVVSDAMQKTVVVAVENRVPHPKYKKIVVRTRKFKAHDEENRCKVGDRVRILESPPLSKTKRWVVLDILDEARNP.

The protein belongs to the universal ribosomal protein uS17 family. In terms of assembly, part of the 30S ribosomal subunit.

In terms of biological role, one of the primary rRNA binding proteins, it binds specifically to the 5'-end of 16S ribosomal RNA. The chain is Small ribosomal subunit protein uS17 from Gloeobacter violaceus (strain ATCC 29082 / PCC 7421).